Consider the following 419-residue polypeptide: UDP-N-acetylglucosamine 1-carboxyvinyltransferase (419 aa).

Residue 22–23 coordinates phosphoenolpyruvate; that stretch reads KN. R92 is a binding site for UDP-N-acetyl-alpha-D-glucosamine. Catalysis depends on C116, which acts as the Proton donor. A 2-(S-cysteinyl)pyruvic acid O-phosphothioketal modification is found at C116. UDP-N-acetyl-alpha-D-glucosamine-binding positions include 121-125, D306, and I328; that span reads RPVDQ.

The protein belongs to the EPSP synthase family. MurA subfamily.

The protein localises to the cytoplasm. It catalyses the reaction phosphoenolpyruvate + UDP-N-acetyl-alpha-D-glucosamine = UDP-N-acetyl-3-O-(1-carboxyvinyl)-alpha-D-glucosamine + phosphate. The protein operates within cell wall biogenesis; peptidoglycan biosynthesis. Its function is as follows. Cell wall formation. Adds enolpyruvyl to UDP-N-acetylglucosamine. Target for the antibiotic phosphomycin. The protein is UDP-N-acetylglucosamine 1-carboxyvinyltransferase of Acinetobacter guillouiae (Acinetobacter genomosp. 11).